Here is a 152-residue protein sequence, read N- to C-terminus: Transcriptional regulator MraZ (152 aa).

2 SpoVT-AbrB domains span residues 5–52 (ATLV…PLPE) and 81–124 (ASEC…DETT).

It belongs to the MraZ family. As to quaternary structure, forms oligomers.

The protein localises to the cytoplasm. It localises to the nucleoid. Negatively regulates its own expression and that of the subsequent genes in the proximal part of the division and cell wall (dcw) gene cluster. Acts by binding directly to DNA. May also regulate the expression of genes outside the dcw cluster. The protein is Transcriptional regulator MraZ of Klebsiella pneumoniae (strain 342).